The sequence spans 117 residues: Large ribosomal subunit protein uL18 (117 aa).

It belongs to the universal ribosomal protein uL18 family. As to quaternary structure, part of the 50S ribosomal subunit; part of the 5S rRNA/L5/L18/L25 subcomplex. Contacts the 5S and 23S rRNAs.

In terms of biological role, this is one of the proteins that bind and probably mediate the attachment of the 5S RNA into the large ribosomal subunit, where it forms part of the central protuberance. In Yersinia pseudotuberculosis serotype O:1b (strain IP 31758), this protein is Large ribosomal subunit protein uL18.